A 727-amino-acid chain; its full sequence is Catalase-peroxidase (727 aa).

The interval 1-21 (MDAKVEDNIAGKCPMGHGRGP) is disordered. Residues 95 to 217 (WHAAGTYRIT…LGAVQMGLIY (123 aa)) constitute a cross-link (tryptophyl-tyrosyl-methioninium (Trp-Tyr) (with M-243)). The active-site Proton acceptor is histidine 96. Positions 217–243 (YVNPEGPNGNPDPLASARDIRETFARM) form a cross-link, tryptophyl-tyrosyl-methioninium (Tyr-Met) (with W-95). A heme b-binding site is contributed by histidine 258.

This sequence belongs to the peroxidase family. Peroxidase/catalase subfamily. As to quaternary structure, homodimer or homotetramer. Heme b serves as cofactor. In terms of processing, formation of the three residue Trp-Tyr-Met cross-link is important for the catalase, but not the peroxidase activity of the enzyme.

The catalysed reaction is H2O2 + AH2 = A + 2 H2O. The enzyme catalyses 2 H2O2 = O2 + 2 H2O. Bifunctional enzyme with both catalase and broad-spectrum peroxidase activity. Important for stationary phase survival. The chain is Catalase-peroxidase from Caulobacter vibrioides (strain ATCC 19089 / CIP 103742 / CB 15) (Caulobacter crescentus).